The primary structure comprises 138 residues: SPbeta prophage-derived uncharacterized protein YopJ (138 aa).

The sequence is that of SPbeta prophage-derived uncharacterized protein YopJ (yopJ) from Bacillus subtilis (strain 168).